The primary structure comprises 408 residues: MDRLNQLSGQLKPNAKQSILQKNPDDVVIVAAYRTAIGKGFKGSFRSVRSEFILTEFLKEFIKKTNIDPSLIEDVAIGNVLNQAAGATEHRGACLAAGIPYTAAFIAVNRFCSSGLMAISDIANKIKTGEIECGLAGGAESMSTNYRDPRVAPRIDPHLADDAQMEKCLIPMGITNENVANQFNISRERQDEFAAKSYNKAAKAVAAGAFKSEILPIRSIIRNSDGTEKEIIVDTDEGPREGVTAESLGKLRPAFDGTTTAGNASQVSDGAAAVLLMKRSLAEAKGYPIIGKYVLCSTAGVPPEIMGVGPAYAIPEVLKRTGLTVDDIDVFEINEAFAAQCLYSAEQVNVPEEKLNINGGAIALGHPLGETGARQYATIIPLLKPGQIGLTSMCIGSGMGSASILVRE.

The active-site Acyl-thioester intermediate is the C112. Active-site proton acceptor residues include H366 and C394.

The protein belongs to the thiolase-like superfamily. Thiolase family. As to quaternary structure, homodimer.

The protein localises to the peroxisome. The enzyme catalyses an acyl-CoA + acetyl-CoA = a 3-oxoacyl-CoA + CoA. It functions in the pathway lipid metabolism; fatty acid metabolism. This is 3-ketoacyl-CoA thiolase A, peroxisomal from Candida tropicalis (Yeast).